We begin with the raw amino-acid sequence, 1067 residues long: Probable isoleucine--tRNA ligase, cytoplasmic (1067 aa).

Residues 47-57 (PFATGLPHYGH) carry the 'HIGH' region motif. The 'KMSKS' region motif lies at 604–608 (KMSKR). Lysine 607 is an ATP binding site.

It belongs to the class-I aminoacyl-tRNA synthetase family.

It is found in the cytoplasm. The catalysed reaction is tRNA(Ile) + L-isoleucine + ATP = L-isoleucyl-tRNA(Ile) + AMP + diphosphate. The sequence is that of Probable isoleucine--tRNA ligase, cytoplasmic (ileS) from Dictyostelium discoideum (Social amoeba).